The following is a 299-amino-acid chain: RGG repeats nuclear RNA binding protein A (299 aa).

The span at 1–21 (RGGGRGGPRGGGRGRGPGRGR) shows a compositional bias: gly residues. Disordered regions lie at residues 1-173 (RGGG…KEMT) and 232-299 (EAVE…LVAK). Basic and acidic residues predominate over residues 45–60 (RVQEDGESGKLSERRG). The segment covering 61–78 (GYGGPRGGFHGGRRGGFN) has biased composition (gly residues). Basic and acidic residues-rich tracts occupy residues 86 to 98 (EGERPRRVFDRRS) and 134 to 146 (DGEKIVEAEKEAG). The short motif at 88–98 (ERPRRVFDRRS) is the Arginine-rich RNA-binding motif E-R-P-R-R-X-[F/Y]-[E/D]-R-R-S element. Positions 267-278 (RGRGGFGGGVGG) are enriched in gly residues.

It belongs to the SERBP1-HABP4 family. Expressed in seedlings but not in roots.

The protein resides in the nucleus. It localises to the cytoplasm. The protein localises to the perinuclear region. Functionally, ribosome-binding protein that acts as a regulator of mRNA translation by promoting ribosome inactivation. Binds RNA. This is RGG repeats nuclear RNA binding protein A from Nicotiana tabacum (Common tobacco).